Consider the following 117-residue polypeptide: uncharacterized protein (117 aa).

Residues 10-32 (VCYLGDIAASGFLNSIATALIAV) form a helical membrane-spanning segment.

The protein resides in the membrane. This is an uncharacterized protein from Rickettsia conorii (strain ATCC VR-613 / Malish 7).